The sequence spans 526 residues: Adenylyl cyclase-associated protein (526 aa).

Residues 1 to 168 (MPDSKYTMQG…RQSKYFAYLS (168 aa)) are adenyl cyclase-binding. 3 disordered regions span residues 43-72 (EASK…PEVE), 255-304 (QSTK…DANK), and 326-371 (KVDK…RPPR). Polar residues predominate over residues 45 to 64 (SKNNKPSDSGADANTTNEPS). An SH3-binding motif is present at residues 169–369 (ALSEGAPLFS…KPSTLKTKRP (201 aa)). Positions 262-274 (ATSSPSPASATAA) are enriched in low complexity. Residues 275-285 (PAPPPPPPAPP) are compositionally biased toward pro residues. Residues 290–302 (EISNDTPATSSDA) are compositionally biased toward polar residues. The span at 326 to 338 (KVDKSQQTHKNPE) shows a compositional bias: basic and acidic residues. A compositionally biased stretch (low complexity) spans 342–352 (SSTVSSTGSKS). Positions 354-361 (PPPRPKKP) are interaction with SH3 domain of ABP1. The segment covering 357-370 (RPKKPSTLKTKRPP) has biased composition (basic residues). Residues 369-504 (PPRKELVGNK…EDDDYVEFPI (136 aa)) form the C-CAP/cofactor C-like domain. The segment at 370–526 (PRKELVGNKW…FKSAVFEHAG (157 aa)) is dimerization and actin-binding. Position 454 is a phosphoserine (Ser454).

This sequence belongs to the CAP family. In terms of assembly, homodimer.

The protein localises to the cytoplasm. It is found in the cytoskeleton. The protein resides in the actin patch. Functionally, the N-terminal domain binds to adenylyl cyclase, thereby enabling adenylyl cyclase to be activated by upstream regulatory signals, such as Ras. The C-terminal domain is required for normal cellular morphology and growth control. This is Adenylyl cyclase-associated protein (SRV2) from Saccharomyces cerevisiae (strain ATCC 204508 / S288c) (Baker's yeast).